Consider the following 54-residue polypeptide: Metallothionein-2 (54 aa).

This sequence belongs to the metallothionein superfamily. Type 11 family.

This chain is Metallothionein-2 (MTP2), found in Yarrowia lipolytica (strain CLIB 122 / E 150) (Yeast).